The following is a 488-amino-acid chain: Cytochrome P450 family 716 subfamily AD polypeptide 2 (488 aa).

The helical transmembrane segment at 5–25 (LLLLSTLLILTLCCHFFYLFI) threads the bilayer. Cysteine 433 is a heme binding site.

It belongs to the cytochrome P450 family. The cofactor is heme. As to expression, expressed in maturing fruits and in juice vesicles.

Its subcellular location is the membrane. It catalyses the reaction (1R,2R,3S,8R,10R,11R,15S,16S)-3-(acetyloxy)-15-[(4R)-4-[(2S)-3,3-dimethyloxiran-2-yl]-1,4-dihydroxybutan-2-yl]-2,7,7,11,16-pentamethyl-5-oxo-6-oxatetracyclo[9.7.0.0(2,8).0(12,16)]octadec-12-en-10-yl acetate + reduced [NADPH--hemoprotein reductase] + O2 = (1R,2R,3S,8R,10R,11R,15S,16S)-3-(acetyloxy)-15-(1-hydroxy-4-oxobutan-2-yl)-2,7,7,11,16-pentamethyl-5-oxo-6-oxatetracyclo[9.7.0.0(2,8).0(12,16)]octadec-12-en-10-yl acetate + 2-methylpropanoate + oxidized [NADPH--hemoprotein reductase] + H2O + 2 H(+). Its pathway is secondary metabolite biosynthesis; terpenoid biosynthesis. In terms of biological role, monooxygenase involved in the biosynthesis of limonoids triterpene natural products such as limonin, a compound with insecticidal activity responsible for the bitter taste in citrus. Catalyzes the formation of (1R,2R,3S,8R,10R,11R,15S,16S)-3-(acetyloxy)-15-(1-hydroxy-4-oxobutan-2-yl)-2,7,7,11,16-pentamethyl-5-oxo-6-oxatetracyclo[9.7.0.0(2,8).0(12,16)]octadec-12-en-10-yl acetate. This is Cytochrome P450 family 716 subfamily AD polypeptide 2 from Citrus sinensis (Sweet orange).